The sequence spans 285 residues: MTAQNIDGTLISQTVRSEVAARVKARVAAGLRAPGLAVVLVGEDPASQVYVGSKRRACEEVGFVSKSFDLPASTSEEELLALIDELNNDAEIDGILVQLPLPAGIDSTHVLESIHPEKDVDGFHPYNVGRLAQRIPKLRSCTPKGIITLLERYNIALRGKHAVIVGASNIVGRPMTLELLLAGCTTTTCHRFTKDLEGHVRQADVLVVAVGKPNFIPGEWVKEGAIVVDVGINRLESGKLIGDVEYNKARERASFITPVPGGVGPMTVASLIENTMLACEQYHTK.

NADP(+) is bound by residues glycine 166–serine 168 and isoleucine 232.

It belongs to the tetrahydrofolate dehydrogenase/cyclohydrolase family. In terms of assembly, homodimer.

It carries out the reaction (6R)-5,10-methylene-5,6,7,8-tetrahydrofolate + NADP(+) = (6R)-5,10-methenyltetrahydrofolate + NADPH. The catalysed reaction is (6R)-5,10-methenyltetrahydrofolate + H2O = (6R)-10-formyltetrahydrofolate + H(+). Its pathway is one-carbon metabolism; tetrahydrofolate interconversion. In terms of biological role, catalyzes the oxidation of 5,10-methylenetetrahydrofolate to 5,10-methenyltetrahydrofolate and then the hydrolysis of 5,10-methenyltetrahydrofolate to 10-formyltetrahydrofolate. This chain is Bifunctional protein FolD, found in Vibrio vulnificus (strain CMCP6).